The sequence spans 186 residues: ATP synthase subunit delta, cyanelle (186 aa).

It belongs to the ATPase delta chain family. As to quaternary structure, F-type ATPases have 2 components, F(1) - the catalytic core - and F(0) - the membrane proton channel. F(1) has five subunits: alpha(3), beta(3), gamma(1), delta(1), epsilon(1). CF(0) has four main subunits: a(1), b(1), b'(1) and c(10-14). The alpha and beta chains form an alternating ring which encloses part of the gamma chain. F(1) is attached to F(0) by a central stalk formed by the gamma and epsilon chains, while a peripheral stalk is formed by the delta, b and b' chains.

The protein localises to the plastid. Its subcellular location is the cyanelle thylakoid membrane. In terms of biological role, f(1)F(0) ATP synthase produces ATP from ADP in the presence of a proton or sodium gradient. F-type ATPases consist of two structural domains, F(1) containing the extramembraneous catalytic core and F(0) containing the membrane proton channel, linked together by a central stalk and a peripheral stalk. During catalysis, ATP synthesis in the catalytic domain of F(1) is coupled via a rotary mechanism of the central stalk subunits to proton translocation. This protein is part of the stalk that links CF(0) to CF(1). It either transmits conformational changes from CF(0) to CF(1) or is implicated in proton conduction. This is ATP synthase subunit delta, cyanelle from Cyanophora paradoxa.